Here is a 296-residue protein sequence, read N- to C-terminus: tRNA uridine(34) hydroxylase (296 aa).

A Rhodanese domain is found at 130–225; that stretch reads RGDDVVFFDG…YGEAYGNDGY (96 aa). The active-site Cysteine persulfide intermediate is the cysteine 185.

The protein belongs to the TrhO family.

It catalyses the reaction uridine(34) in tRNA + AH2 + O2 = 5-hydroxyuridine(34) in tRNA + A + H2O. Functionally, catalyzes oxygen-dependent 5-hydroxyuridine (ho5U) modification at position 34 in tRNAs. The sequence is that of tRNA uridine(34) hydroxylase from Corynebacterium kroppenstedtii (strain DSM 44385 / JCM 11950 / CIP 105744 / CCUG 35717).